The primary structure comprises 207 residues: Outer-membrane lipoprotein LolB (207 aa).

Positions 1–21 (MPLPDFRLIRLLPLAALVLTA) are cleaved as a signal peptide. A lipid anchor (N-palmitoyl cysteine) is attached at Cys-22. Cys-22 carries the S-diacylglycerol cysteine lipid modification.

Belongs to the LolB family. Monomer.

It localises to the cell outer membrane. Functionally, plays a critical role in the incorporation of lipoproteins in the outer membrane after they are released by the LolA protein. In Escherichia coli O127:H6 (strain E2348/69 / EPEC), this protein is Outer-membrane lipoprotein LolB.